We begin with the raw amino-acid sequence, 129 residues long: RxLR effector protein SFI6 (129 aa).

The first 16 residues, 1 to 16 (MTLVVLATGLLASGTA), serve as a signal peptide directing secretion. Residues 42–64 (RFLRSHQITDDKVEINEHGEEER) carry the RxLR-dEER motif.

It belongs to the RxLR effector family.

The protein resides in the secreted. It localises to the host cytoplasm. The protein localises to the host cell membrane. In terms of biological role, effector that suppresses flg22-induced post-translational MAP kinase activation in tomato but not in Arabidopsis. The perception of highly conserved pathogen- or microbe-associated molecular patterns (PAMPs/MAMPs), such as flg22, triggers converging signaling pathways recruiting MAP kinase cascades and inducing transcriptional re-programming, yielding a generic antimicrobial response. The chain is RxLR effector protein SFI6 from Phytophthora infestans (strain T30-4) (Potato late blight agent).